Here is a 501-residue protein sequence, read N- to C-terminus: MSNNRRNVRTPTKFDKNTKTIQIFGKTSIVLKNMSIQERIDEVTQLLKQLKMIRDEETNTQKALIMEHEEVVYNYESSEEGFPVEPKTEEKDIPSTSGQKRTYEFMKDDFWNSGEFDKYAEKRGFIKKDGGGYSKIPKEYKPIHQDENSSILNLDCIDNAPALFVSWTSKHGLELQLNKHFENFSDNEIWNYTQYYTRGSVQKFLSEQDYQTDVAPNLALVQGGPYAKFKYIVQTIYGEFIGKDIRDHSQDLINQEAEKARFHLANMIICDLCYFDNYTCEYRKYFYMLTPDERSTYIELFLQKLPAPFGRKMMEGFRKETAENKIANTLGGAIDIVRRTIDEECIQRSYRRTIGGAVKICCKGNPEIPQRYGCYDITKRKKTSKKKWKKRSYKPDLWKKKKRFFKRRDFSKKKKENPGKKKFCPTGKKSCKCWICHEEGHYANECPKKTKEKHKDKVKLLMEAEEEGFEPLESEASDIEEIFEIVEEDSESSSEEDEEQR.

A disordered region spans residues 78–98 (SEEGFPVEPKTEEKDIPSTSG). The Nuclear localization signal motif lies at 122–125 (KRGF). The segment at 431–448 (CKCWICHEEGHYANECPK) adopts a CCHC-type zinc-finger fold.

Belongs to the caulimoviridae capsid protein family. As to quaternary structure, interacts (via nuclear localization signal) with host importin alpha.

The protein localises to the virion. It localises to the host nucleus. Self assembles to form an icosahedral capsid, about 50 nm in diameter, nm, composed of 420 subunits of the viral capsid protein. The capsid encapsulates the genomic dsDNA. Following virus entry into host cell, provides nuclear import of the viral genome. Virus particles do not enter the nucleus, but dock at the nuclear membrane through the interaction with host importins. In Cestrum parqui (CmYLCV), this protein is Capsid protein.